The chain runs to 184 residues: Endothelial cell-specific molecule 1 (184 aa).

The N-terminal stretch at 1–21 is a signal peptide; the sequence is MKSLLLLTTLLVPLHLGMAWS. The region spanning 24 to 102 is the IGFBP N-terminal domain; it reads YAVDCPEHCD…GDEFGICKDC (79 aa). Intrachain disulfides connect C28–C51, C32–C53, C37–C54, C43–C57, C65–C83, and C77–C99. Residues 145-184 form a disordered region; it reads RTSASHTERDSASGDGNAVREEIGEGNAARPSVMKWLNPR. A compositionally biased stretch (basic and acidic residues) spans 150-167; that stretch reads HTERDSASGDGNAVREEI. S157 carries an O-linked (Xyl...) (chondroitin sulfate) serine glycan.

O-glycosylated; contains chondroitin sulfate and dermatan sulfate.

It is found in the secreted. Involved in angiogenesis; promotes angiogenic sprouting. May have potent implications in lung endothelial cell-leukocyte interactions. This chain is Endothelial cell-specific molecule 1 (Esm1), found in Mus musculus (Mouse).